A 209-amino-acid polypeptide reads, in one-letter code: Ribosomal RNA large subunit methyltransferase E (209 aa).

Positions 63, 65, 83, 99, and 124 each coordinate S-adenosyl-L-methionine. Lys164 functions as the Proton acceptor in the catalytic mechanism. Residues 191–209 (EASRGRSREVYIVATGYKG) enclose the TRAM domain.

This sequence belongs to the class I-like SAM-binding methyltransferase superfamily. RNA methyltransferase RlmE family.

Its subcellular location is the cytoplasm. It catalyses the reaction uridine(2552) in 23S rRNA + S-adenosyl-L-methionine = 2'-O-methyluridine(2552) in 23S rRNA + S-adenosyl-L-homocysteine + H(+). Its function is as follows. Specifically methylates the uridine in position 2552 of 23S rRNA at the 2'-O position of the ribose in the fully assembled 50S ribosomal subunit. This chain is Ribosomal RNA large subunit methyltransferase E, found in Haemophilus influenzae (strain ATCC 51907 / DSM 11121 / KW20 / Rd).